We begin with the raw amino-acid sequence, 150 residues long: Large ribosomal subunit protein bL9 (150 aa).

The protein belongs to the bacterial ribosomal protein bL9 family.

In terms of biological role, binds to the 23S rRNA. The chain is Large ribosomal subunit protein bL9 from Yersinia enterocolitica serotype O:8 / biotype 1B (strain NCTC 13174 / 8081).